Reading from the N-terminus, the 460-residue chain is Ribosome biogenesis protein YTM1 (460 aa).

The segment at 8-89 is ubiquitin-like (UBL) domain; it reads VKIRFFTREK…EASLNVEYTR (82 aa). The sufficient for interaction with ERB1 and association with 66S pre-ribosomes stretch occupies residues 99 to 460; it reads SFSNEDWVSS…INKGDNIFKN (362 aa). WD repeat units follow at residues 101-140, 142-180, 206-244, 285-325, 327-366, 373-413, and 424-460; these read SNEDWVSSLDVGDGSKHIISGSYDGIVRTWDLSGNVQKQY, GHSGPIRAVKYISNTRLVSAGNDRTLRLWKTKNDDLKLT, GHKAPVVSIDVSDNSRILSASYDNSIGFWSTIYKEMTVV, SHTA…CIDT, TTSYSLLSIAQLSTLNLLACGSSARHITLHDPRVGASSKV, GHKN…PMYT, and GVNDKVFAVKWAEKVGIISAGQDKKIQINKGDNIFKN.

The protein belongs to the WD repeat WDR12/YTM1 family. In terms of assembly, component of the NOP7 complex, composed of ERB1, NOP7 and YTM1. The complex is held together by ERB1, which interacts with NOP7 via its N-terminal domain and with YTM1 via a high-affinity interaction between the seven-bladed beta-propeller domains of the 2 proteins. The NOP7 complex associates with the 66S pre-ribosome. Interacts (via UBL domain) with MDN1 (via VWFA/MIDAS domain).

It is found in the nucleus. The protein localises to the nucleolus. It localises to the nucleoplasm. Its function is as follows. Component of the NOP7 complex, which is required for maturation of the 25S and 5.8S ribosomal RNAs and formation of the 60S ribosome. The sequence is that of Ribosome biogenesis protein YTM1 from Saccharomyces cerevisiae (strain YJM789) (Baker's yeast).